A 418-amino-acid chain; its full sequence is UDP-N-acetylglucosamine 1-carboxyvinyltransferase (418 aa).

A phosphoenolpyruvate-binding site is contributed by 22–23 (KN). Arg92 is a UDP-N-acetyl-alpha-D-glucosamine binding site. The Proton donor role is filled by Cys116. 2-(S-cysteinyl)pyruvic acid O-phosphothioketal is present on Cys116. UDP-N-acetyl-alpha-D-glucosamine contacts are provided by Asp306 and Ile328.

Belongs to the EPSP synthase family. MurA subfamily.

It localises to the cytoplasm. It carries out the reaction phosphoenolpyruvate + UDP-N-acetyl-alpha-D-glucosamine = UDP-N-acetyl-3-O-(1-carboxyvinyl)-alpha-D-glucosamine + phosphate. It participates in cell wall biogenesis; peptidoglycan biosynthesis. Its function is as follows. Cell wall formation. Adds enolpyruvyl to UDP-N-acetylglucosamine. In Solibacter usitatus (strain Ellin6076), this protein is UDP-N-acetylglucosamine 1-carboxyvinyltransferase.